A 218-amino-acid polypeptide reads, in one-letter code: GTP cyclohydrolase 1 (218 aa).

C109, H112, and C180 together coordinate Zn(2+).

It belongs to the GTP cyclohydrolase I family. As to quaternary structure, toroid-shaped homodecamer, composed of two pentamers of five dimers.

It catalyses the reaction GTP + H2O = 7,8-dihydroneopterin 3'-triphosphate + formate + H(+). It functions in the pathway cofactor biosynthesis; 7,8-dihydroneopterin triphosphate biosynthesis; 7,8-dihydroneopterin triphosphate from GTP: step 1/1. The chain is GTP cyclohydrolase 1 from Actinobacillus pleuropneumoniae serotype 5b (strain L20).